We begin with the raw amino-acid sequence, 953 residues long: Isoleucine--tRNA ligase (953 aa).

Positions 57-67 (PYANGDIHIGH) match the 'HIGH' region motif. An L-isoleucyl-5'-AMP-binding site is contributed by Glu-582. The short motif at 623–627 (KMSKS) is the 'KMSKS' region element. Lys-626 contributes to the ATP binding site. Positions 916, 919, 936, and 939 each coordinate Zn(2+).

This sequence belongs to the class-I aminoacyl-tRNA synthetase family. IleS type 1 subfamily. As to quaternary structure, monomer. The cofactor is Zn(2+).

Its subcellular location is the cytoplasm. It catalyses the reaction tRNA(Ile) + L-isoleucine + ATP = L-isoleucyl-tRNA(Ile) + AMP + diphosphate. Its function is as follows. Catalyzes the attachment of isoleucine to tRNA(Ile). As IleRS can inadvertently accommodate and process structurally similar amino acids such as valine, to avoid such errors it has two additional distinct tRNA(Ile)-dependent editing activities. One activity is designated as 'pretransfer' editing and involves the hydrolysis of activated Val-AMP. The other activity is designated 'posttransfer' editing and involves deacylation of mischarged Val-tRNA(Ile). This chain is Isoleucine--tRNA ligase, found in Bordetella bronchiseptica (strain ATCC BAA-588 / NCTC 13252 / RB50) (Alcaligenes bronchisepticus).